A 284-amino-acid polypeptide reads, in one-letter code: 2-dehydro-3-deoxyphosphooctonate aldolase (284 aa).

This sequence belongs to the KdsA family.

The protein resides in the cytoplasm. It catalyses the reaction D-arabinose 5-phosphate + phosphoenolpyruvate + H2O = 3-deoxy-alpha-D-manno-2-octulosonate-8-phosphate + phosphate. It participates in carbohydrate biosynthesis; 3-deoxy-D-manno-octulosonate biosynthesis; 3-deoxy-D-manno-octulosonate from D-ribulose 5-phosphate: step 2/3. It functions in the pathway bacterial outer membrane biogenesis; lipopolysaccharide biosynthesis. This chain is 2-dehydro-3-deoxyphosphooctonate aldolase, found in Vibrio atlanticus (strain LGP32) (Vibrio splendidus (strain Mel32)).